We begin with the raw amino-acid sequence, 325 residues long: Palmitoyltransferase PFA3 (325 aa).

The Cytoplasmic portion of the chain corresponds to 1–5 (MLLDR). A helical transmembrane segment spans residues 6–26 (IGFYFPKALSNFLILYTCCIC). At 27-35 (FSRIDILPR) the chain is on the lumenal side. The chain crosses the membrane as a helical span at residues 36–56 (IVNVVLLITLSSFALYTYWKI). Topologically, residues 57-146 (IRVGAGSPLE…ASCVGFRNQK (90 aa)) are cytoplasmic. Positions 103 to 153 (RFCQTCEIWKPDRCHHCSKCNKCFLKMDHHCPWFASCVGFRNQKFFVQFLA) constitute a DHHC domain. A helical membrane pass occupies residues 147–167 (FFVQFLAYTTVYSLYVLLMTS). Over 168 to 185 (AQLYSWFRQMKYKSELLD) the chain is Lumenal. A helical transmembrane segment spans residues 186 to 206 (LHLLVVWVLSVIAAIATFAFT). The Cytoplasmic segment spans residues 207–325 (TYTIWLVTKN…LTLRPSIEHI (119 aa)).

Belongs to the DHHC palmitoyltransferase family. PFA3 subfamily. Post-translationally, autopalmitoylated.

The protein resides in the vacuole membrane. The enzyme catalyses L-cysteinyl-[protein] + hexadecanoyl-CoA = S-hexadecanoyl-L-cysteinyl-[protein] + CoA. Its function is as follows. Palmitoyltransferase specific for VAC8. Palmitoylates VAC8 at one or more of its N-terminal cysteine residues, which is required for its proper membrane localization. This Kluyveromyces lactis (strain ATCC 8585 / CBS 2359 / DSM 70799 / NBRC 1267 / NRRL Y-1140 / WM37) (Yeast) protein is Palmitoyltransferase PFA3 (PFA3).